Here is an 890-residue protein sequence, read N- to C-terminus: Pentatricopeptide repeat-containing protein At3g57430, chloroplastic (890 aa).

A chloroplast-targeting transit peptide spans 1–44 (MSCPLAFTFSLPSIFPFPSQLLPFSRHKHPYLLRATPTSATEDV). PPR repeat units lie at residues 61-95 (SPEW…GIKP), 96-130 (DNYA…GYGV), 132-162 (SVTV…ISER), 163-197 (NQVS…NVEP), 198-231 (SSFT…GLRK), 235-265 (NSFI…FGGR), 266-300 (DLVT…GVEP), 301-335 (DEFT…GSLD), 337-371 (NSFV…KIGL), 372-398 (WNAM…MEES), 404-438 (NSTT…GLDR), 439-473 (DRFV…DLVT), 474-504 (WNTM…ERKV), 516-550 (NSIT…NLAT), 551-581 (DVAV…IPQK), 582-616 (NVIT…GVKP), 617-652 (NEVT…GVEP), and 653-683 (SSDH…MPRD). Positions 689-764 (AWSSLLGASR…EPGCSWIEHG (76 aa)) are type E motif. The segment at 765 to 795 (DEVHKFVAGDSSHPQSEKLSGYLETLWERMR) is type E(+) motif. The interval 796–890 (KEGYVPDTSC…NGTCSCGDYW (95 aa)) is type DYW motif.

The protein belongs to the PPR family. PCMP-H subfamily.

The protein localises to the plastid. Its subcellular location is the chloroplast. In terms of biological role, involved in RNA editing events in chloroplasts. Required for the editing of a single site in ndhB and ndhF transcripts, which are two plastid-encoded subunits of the chloroplast NAD(P)H dehydrogenase (NDH) complex. Required for the editing of a single site in psbZ. Required for optimal activity of the NDH complex of the photosynthetic electron transport chain. This is Pentatricopeptide repeat-containing protein At3g57430, chloroplastic (PCMP-H81) from Arabidopsis thaliana (Mouse-ear cress).